Consider the following 130-residue polypeptide: MAREKAASRKKKERKNILNGIAHIRSTFNNTIVTITDASGNAISWSSAGSQGFKGSRKSTPFAAQVAAEIAAKKAMEHGVQNIEVYVKGPGSGREAALRALQAAGFNITVIKDVTPIPHNGCRPPKRRRV.

Belongs to the universal ribosomal protein uS11 family. Part of the 30S ribosomal subunit. Interacts with proteins S7 and S18. Binds to IF-3.

In terms of biological role, located on the platform of the 30S subunit, it bridges several disparate RNA helices of the 16S rRNA. Forms part of the Shine-Dalgarno cleft in the 70S ribosome. In Syntrophobacter fumaroxidans (strain DSM 10017 / MPOB), this protein is Small ribosomal subunit protein uS11.